A 360-amino-acid chain; its full sequence is Phosphoserine aminotransferase (360 aa).

Residue Arg42 coordinates L-glutamate. Residues Trp102, Thr152, Asp171, and Gln194 each coordinate pyridoxal 5'-phosphate. An N6-(pyridoxal phosphate)lysine modification is found at Lys195. Pyridoxal 5'-phosphate is bound at residue 237–238 (NT).

It belongs to the class-V pyridoxal-phosphate-dependent aminotransferase family. SerC subfamily. Homodimer. Requires pyridoxal 5'-phosphate as cofactor.

The protein localises to the cytoplasm. The catalysed reaction is O-phospho-L-serine + 2-oxoglutarate = 3-phosphooxypyruvate + L-glutamate. The enzyme catalyses 4-(phosphooxy)-L-threonine + 2-oxoglutarate = (R)-3-hydroxy-2-oxo-4-phosphooxybutanoate + L-glutamate. The protein operates within amino-acid biosynthesis; L-serine biosynthesis; L-serine from 3-phospho-D-glycerate: step 2/3. It participates in cofactor biosynthesis; pyridoxine 5'-phosphate biosynthesis; pyridoxine 5'-phosphate from D-erythrose 4-phosphate: step 3/5. Catalyzes the reversible conversion of 3-phosphohydroxypyruvate to phosphoserine and of 3-hydroxy-2-oxo-4-phosphonooxybutanoate to phosphohydroxythreonine. The polypeptide is Phosphoserine aminotransferase (Coxiella burnetii (strain CbuK_Q154) (Coxiella burnetii (strain Q154))).